A 160-amino-acid chain; its full sequence is Snaclec subunit A (160 aa).

The signal sequence occupies residues Met-1–Ala-23. Disulfide bonds link Cys-25/Cys-36, Cys-53/Cys-150, and Cys-125/Cys-142. The C-type lectin domain maps to Tyr-32–Lys-151.

It belongs to the snaclec family. In terms of assembly, heterodimer of subunits A and B; disulfide-linked. In terms of tissue distribution, expressed by the venom gland.

The protein localises to the secreted. In terms of biological role, interferes with one step of hemostasis (modulation of platelet aggregation, or coagulation cascade, for example). This Philodryas olfersii (Green snake) protein is Snaclec subunit A.